The primary structure comprises 159 residues: Phosphopantetheine adenylyltransferase (159 aa).

Substrate is bound at residue T10. Residues 10-11 (TF) and H18 contribute to the ATP site. Substrate contacts are provided by K42, M74, and R88. Residues 89–91 (GLR), E99, and 124–130 (WSFISSS) contribute to the ATP site.

Belongs to the bacterial CoaD family. Homohexamer. Requires Mg(2+) as cofactor.

The protein resides in the cytoplasm. It catalyses the reaction (R)-4'-phosphopantetheine + ATP + H(+) = 3'-dephospho-CoA + diphosphate. It participates in cofactor biosynthesis; coenzyme A biosynthesis; CoA from (R)-pantothenate: step 4/5. Reversibly transfers an adenylyl group from ATP to 4'-phosphopantetheine, yielding dephospho-CoA (dPCoA) and pyrophosphate. In Enterobacter sp. (strain 638), this protein is Phosphopantetheine adenylyltransferase.